The chain runs to 177 residues: Immunity protein CdiI-YPIII (177 aa).

Interacts with the C-terminal DNase fragment (residues 954-1077) of cognate toxin CdiA-YPIII.

In terms of biological role, immunity protein component of a toxin-immunity protein module, which functions as a cellular contact-dependent growth inhibition (CDI) system. CDI modules allow bacteria to communicate with and inhibit the growth of closely related neighboring bacteria in a contact-dependent fashion. Neutralizes the toxic activity of cognate toxin CdiA-YPIII (residues 954-1077). Does not inhibit toxic activity of CdiA from other toxin-immunity modules. This Yersinia pseudotuberculosis serotype O:3 (strain YPIII) protein is Immunity protein CdiI-YPIII.